The following is a 388-amino-acid chain: MRYLTAGESHGPRLTAIIEGIPAGLPLTAEDINEDLRRRQGGYGRGGRMKIENDQVVFTSGVRHGKTTGAPITMDVINKDHQKWLDIMSAEDIEDRLKSKRKITHPRPGHADLVGGIKYRFDDLRNSLERSSARETTMRVAVGAVAKRLLAELDMEIANHVVVFGGKEIDVPENLTVAEIKQRAAQSEVSIVNQEREQEIKDYIDQIKRDGDTIGGVVETVVGGVPVGLGSYVQWDRKLDARLAQAVVSINAFKGVEFGLGFEAGYRKGSQVMDEILWSKEDGYTRRTNNLGGFEGGMTNGQPIVVRGVMKPIPTLYKPLMSVDIETHEPYKATVERSDPTALPAAGMVMEAVVATVLAQEILEKFSSDNLEELKEAVAKHRDYTKNY.

R39 and R45 together coordinate NADP(+). Residues 130–132, 251–252, G296, 311–315, and R337 each bind FMN; these read RSS, NA, and KPIPT.

It belongs to the chorismate synthase family. Homotetramer. It depends on FMNH2 as a cofactor.

It catalyses the reaction 5-O-(1-carboxyvinyl)-3-phosphoshikimate = chorismate + phosphate. The protein operates within metabolic intermediate biosynthesis; chorismate biosynthesis; chorismate from D-erythrose 4-phosphate and phosphoenolpyruvate: step 7/7. Catalyzes the anti-1,4-elimination of the C-3 phosphate and the C-6 proR hydrogen from 5-enolpyruvylshikimate-3-phosphate (EPSP) to yield chorismate, which is the branch point compound that serves as the starting substrate for the three terminal pathways of aromatic amino acid biosynthesis. This reaction introduces a second double bond into the aromatic ring system. The polypeptide is Chorismate synthase (Streptococcus pneumoniae serotype 2 (strain D39 / NCTC 7466)).